Reading from the N-terminus, the 110-residue chain is Phosphoribosyl-ATP pyrophosphatase (110 aa).

It belongs to the PRA-PH family.

The protein localises to the cytoplasm. It catalyses the reaction 1-(5-phospho-beta-D-ribosyl)-ATP + H2O = 1-(5-phospho-beta-D-ribosyl)-5'-AMP + diphosphate + H(+). It functions in the pathway amino-acid biosynthesis; L-histidine biosynthesis; L-histidine from 5-phospho-alpha-D-ribose 1-diphosphate: step 2/9. This Pseudomonas syringae pv. tomato (strain ATCC BAA-871 / DC3000) protein is Phosphoribosyl-ATP pyrophosphatase.